A 116-amino-acid chain; its full sequence is Ig heavy chain V region 3-6 (116 aa).

A signal peptide spans 1-18 (MKVLSLLYLLTAIPGILS). The framework-1 stretch occupies residues 19–48 (DVQLQESGPGLVKPSQSLSLTCSVTGYSIT). A disulfide bridge links cysteine 40 with cysteine 114. The segment at 49-53 (SGYYW) is complementarity-determining-1. The interval 54–67 (NWIRQFPGNKLEWM) is framework-2. Residues 68–84 (GYISYDGSNNYNPSLKN) are complementarity-determining-2. The interval 85–116 (RISITRDTSKNQFFLKLNSVTTEDTATYYCAR) is framework-3.

The sequence is that of Ig heavy chain V region 3-6 (Ighv3-6) from Mus musculus (Mouse).